The primary structure comprises 906 residues: Peroxisomal hydratase-dehydrogenase-epimerase (906 aa).

Short-chain dehydrogenase like regions lie at residues 5-228 and 319-532; these read DFKD…SSAE and SLKD…GTDD. Ile-13, Lys-52, Asn-98, and Lys-131 together coordinate NADP(+). Residues Ser-149 and Tyr-163 each act as proton donor in the active site. NADP(+) contacts are provided by Tyr-163 and Lys-167. Tyr-163 functions as the Proton acceptor in the catalytic mechanism. The active-site Lowers pKa of active site Tyr is the Lys-167. Tyr-467 (proton acceptor) is an active-site residue. The disordered stretch occupies residues 600-633; sequence AVGGDDDDDDEDEEEDEGDEEEDEEDEEEDDPVW. Residues 603 to 630 are compositionally biased toward acidic residues; the sequence is GDDDDDDEDEEEDEGDEEEDEEDEEEDD. (3R)-3-hydroxydecanoyl-CoA contacts are provided by His-699, Gly-700, Lys-729, Tyr-757, Asp-808, Asn-810, Gly-831, Phe-856, Thr-857, and Gly-858. Residues 782–893 form the MaoC-like domain; it reads APKRAPDYQV…VVDRGTIAIN (112 aa). A Microbody targeting signal motif is present at residues 904-906; the sequence is AKI.

The protein belongs to the short-chain dehydrogenases/reductases (SDR) family. As to quaternary structure, monomer.

Its subcellular location is the peroxisome. It catalyses the reaction a (3R)-3-hydroxyacyl-CoA = a (2E)-enoyl-CoA + H2O. It carries out the reaction a (3R)-3-hydroxyacyl-CoA + NAD(+) = a 3-oxoacyl-CoA + NADH + H(+). It participates in lipid metabolism; fatty acid beta-oxidation. Its function is as follows. Second trifunctional enzyme acting on the beta-oxidation pathway for fatty acids, possessing hydratase-dehydrogenase-epimerase activities. Converts trans-2-enoyl-CoA via D-3-hydroxyacyl-CoA to 3-ketoacyl-CoA. This chain is Peroxisomal hydratase-dehydrogenase-epimerase, found in Candida tropicalis (Yeast).